Reading from the N-terminus, the 1026-residue chain is UPF0182 protein FRAAL6027 (1026 aa).

Transmembrane regions (helical) follow at residues alanine 13–phenylalanine 33, isoleucine 60–leucine 80, tyrosine 108–alanine 128, phenylalanine 167–histidine 187, alanine 208–aspartate 228, alanine 250–isoleucine 270, and leucine 283–isoleucine 303. Residues alanine 877 to threonine 888 are compositionally biased toward low complexity. Disordered stretches follow at residues alanine 877–alanine 916 and leucine 958–glycine 1026. The segment covering threonine 889–glycine 903 has biased composition (gly residues). Residues proline 970 to glycine 1001 show a composition bias toward low complexity. The span at proline 1016 to glycine 1026 shows a compositional bias: pro residues.

The protein belongs to the UPF0182 family.

Its subcellular location is the cell membrane. The polypeptide is UPF0182 protein FRAAL6027 (Frankia alni (strain DSM 45986 / CECT 9034 / ACN14a)).